A 912-amino-acid polypeptide reads, in one-letter code: Tiger protein E1 (912 aa).

The signal sequence occupies residues 1-22 (MKLKHLTIFLFIFIYRFLFVKS). The Extracellular segment spans residues 23–815 (DCYLINNERP…YSENKSSGFP (793 aa)). N-linked (GlcNAc...) asparagine glycosylation is found at N54, N108, N164, N183, N232, N268, N323, N356, N398, N407, N568, N637, N653, N658, N706, N716, N763, N774, N781, and N809. IPT/TIG domains lie at 532 to 609 (SSDQ…GPFT) and 612 to 686 (PVIE…PLII). The IPT/TIG 3 domain maps to 715-796 (TNTSDIDQTA…DGQYFIAQIF (82 aa)). A helical transmembrane segment spans residues 816–836 (NEMYIGIVAIIIFLALIFFAI). At 837 to 912 (KTQVEKYIEE…IRCCFKEHTD (76 aa)) the chain is on the cytoplasmic side.

Its subcellular location is the cell membrane. This chain is Tiger protein E1 (tgrE1), found in Dictyostelium discoideum (Social amoeba).